Consider the following 297-residue polypeptide: Acetylglutamate kinase (297 aa).

Residues 73–74 (GG), arginine 95, and asparagine 188 each bind substrate.

This sequence belongs to the acetylglutamate kinase family. ArgB subfamily.

It is found in the cytoplasm. The enzyme catalyses N-acetyl-L-glutamate + ATP = N-acetyl-L-glutamyl 5-phosphate + ADP. The protein operates within amino-acid biosynthesis; L-arginine biosynthesis; N(2)-acetyl-L-ornithine from L-glutamate: step 2/4. Catalyzes the ATP-dependent phosphorylation of N-acetyl-L-glutamate. This chain is Acetylglutamate kinase, found in Trichormus variabilis (strain ATCC 29413 / PCC 7937) (Anabaena variabilis).